A 1381-amino-acid polypeptide reads, in one-letter code: DNA-directed RNA polymerase subunit beta'' (1381 aa).

Zn(2+) contacts are provided by Cys220, Cys293, Cys300, and Cys303.

It belongs to the RNA polymerase beta' chain family. RpoC2 subfamily. As to quaternary structure, in plastids the minimal PEP RNA polymerase catalytic core is composed of four subunits: alpha, beta, beta', and beta''. When a (nuclear-encoded) sigma factor is associated with the core the holoenzyme is formed, which can initiate transcription. Zn(2+) is required as a cofactor.

It localises to the plastid. The protein resides in the chloroplast. The enzyme catalyses RNA(n) + a ribonucleoside 5'-triphosphate = RNA(n+1) + diphosphate. DNA-dependent RNA polymerase catalyzes the transcription of DNA into RNA using the four ribonucleoside triphosphates as substrates. This chain is DNA-directed RNA polymerase subunit beta'', found in Draba nemorosa (Woodland whitlowgrass).